The chain runs to 271 residues: 5-deoxy-glucuronate isomerase (271 aa).

It belongs to the isomerase IolB family.

The catalysed reaction is 5-deoxy-D-glucuronate = 5-dehydro-2-deoxy-D-gluconate. It participates in polyol metabolism; myo-inositol degradation into acetyl-CoA; acetyl-CoA from myo-inositol: step 4/7. In terms of biological role, involved in the isomerization of 5-deoxy-glucuronate (5DG) to 5-dehydro-2-deoxy-D-gluconate (DKG or 2-deoxy-5-keto-D-gluconate). This Lacticaseibacillus casei (Lactobacillus casei) protein is 5-deoxy-glucuronate isomerase.